Consider the following 615-residue polypeptide: Elongation factor 4 (615 aa).

The region spanning 14-200 (SRIRNFCIIA…KVVELIPAPS (187 aa)) is the tr-type G domain. GTP is bound by residues 26 to 31 (DHGKST) and 147 to 150 (NKID).

It belongs to the TRAFAC class translation factor GTPase superfamily. Classic translation factor GTPase family. LepA subfamily.

Its subcellular location is the cell membrane. It catalyses the reaction GTP + H2O = GDP + phosphate + H(+). Functionally, required for accurate and efficient protein synthesis under certain stress conditions. May act as a fidelity factor of the translation reaction, by catalyzing a one-codon backward translocation of tRNAs on improperly translocated ribosomes. Back-translocation proceeds from a post-translocation (POST) complex to a pre-translocation (PRE) complex, thus giving elongation factor G a second chance to translocate the tRNAs correctly. Binds to ribosomes in a GTP-dependent manner. This is Elongation factor 4 from Corynebacterium efficiens (strain DSM 44549 / YS-314 / AJ 12310 / JCM 11189 / NBRC 100395).